The chain runs to 89 residues: Small capsomere-interacting protein (89 aa).

The tract at residues 1–31 is disordered; sequence MTTIRGDDLSNQITQISGSSSKKEEEKKKQQ. The span at 9-18 shows a compositional bias: polar residues; that stretch reads LSNQITQISG.

This sequence belongs to the herpesviridae small capsomere-interacting protein family. In terms of assembly, interacts with the major capsid protein/MCP.

It is found in the virion. The protein localises to the host nucleus. Participates in the assembly of the infectious particles by decorating the outer surface of the capsid shell and thus forming a layer between the capsid and the tegument. Complexes composed of the major capsid protein and small capsomere-interacting protein/SCP assemble together in the host cytoplasm and are translocated to the nucleus, where they accumulate and participate in capsid assembly. The sequence is that of Small capsomere-interacting protein from Human herpesvirus 6B (HHV-6 variant B).